Consider the following 84-residue polypeptide: MAHKKAGGSTRNGRDSHSKRLGVKCFGGECVSSGTIIVRQRGNTFHPGKYVGCGRDYTLFALKSGKVLFEKRGALRRKFISIVS.

A disordered region spans residues 1–20 (MAHKKAGGSTRNGRDSHSKR).

The protein belongs to the bacterial ribosomal protein bL27 family.

In Blochmanniella pennsylvanica (strain BPEN), this protein is Large ribosomal subunit protein bL27.